The following is a 629-amino-acid chain: tRNA uridine 5-carboxymethylaminomethyl modification enzyme MnmG (629 aa).

Residues 13-18 (GGGHAG), Val-125, and Ser-180 each bind FAD. 273-287 (GPRYCPSIEDKVMRF) contributes to the NAD(+) binding site. An FAD-binding site is contributed by Gln-370.

Belongs to the MnmG family. As to quaternary structure, homodimer. Heterotetramer of two MnmE and two MnmG subunits. FAD is required as a cofactor.

It localises to the cytoplasm. NAD-binding protein involved in the addition of a carboxymethylaminomethyl (cmnm) group at the wobble position (U34) of certain tRNAs, forming tRNA-cmnm(5)s(2)U34. This is tRNA uridine 5-carboxymethylaminomethyl modification enzyme MnmG from Escherichia coli O157:H7.